A 457-amino-acid polypeptide reads, in one-letter code: Bifunctional protein GlmU (457 aa).

The pyrophosphorylase stretch occupies residues 1–230 (MSKRYAVVLA…FEESLGVNDR (230 aa)). Residues 9–12 (LAAG), K23, Q73, and 78–79 (GT) contribute to the UDP-N-acetyl-alpha-D-glucosamine site. Residue D103 coordinates Mg(2+). 4 residues coordinate UDP-N-acetyl-alpha-D-glucosamine: G140, E155, N170, and N228. N228 provides a ligand contact to Mg(2+). Residues 231–251 (IALAEASKLMQRRINENHMRN) form a linker region. Residues 252-457 (GVTLVNPENT…GYAKHLNHGK (206 aa)) are N-acetyltransferase. Positions 333 and 351 each coordinate UDP-N-acetyl-alpha-D-glucosamine. The active-site Proton acceptor is H363. 2 residues coordinate UDP-N-acetyl-alpha-D-glucosamine: Y366 and N377. Acetyl-CoA contacts are provided by residues 386-387 (NY), A423, and R440.

This sequence in the N-terminal section; belongs to the N-acetylglucosamine-1-phosphate uridyltransferase family. It in the C-terminal section; belongs to the transferase hexapeptide repeat family. Homotrimer. The cofactor is Mg(2+).

It localises to the cytoplasm. The catalysed reaction is alpha-D-glucosamine 1-phosphate + acetyl-CoA = N-acetyl-alpha-D-glucosamine 1-phosphate + CoA + H(+). It carries out the reaction N-acetyl-alpha-D-glucosamine 1-phosphate + UTP + H(+) = UDP-N-acetyl-alpha-D-glucosamine + diphosphate. Its pathway is nucleotide-sugar biosynthesis; UDP-N-acetyl-alpha-D-glucosamine biosynthesis; N-acetyl-alpha-D-glucosamine 1-phosphate from alpha-D-glucosamine 6-phosphate (route II): step 2/2. It functions in the pathway nucleotide-sugar biosynthesis; UDP-N-acetyl-alpha-D-glucosamine biosynthesis; UDP-N-acetyl-alpha-D-glucosamine from N-acetyl-alpha-D-glucosamine 1-phosphate: step 1/1. It participates in bacterial outer membrane biogenesis; LPS lipid A biosynthesis. In terms of biological role, catalyzes the last two sequential reactions in the de novo biosynthetic pathway for UDP-N-acetylglucosamine (UDP-GlcNAc). The C-terminal domain catalyzes the transfer of acetyl group from acetyl coenzyme A to glucosamine-1-phosphate (GlcN-1-P) to produce N-acetylglucosamine-1-phosphate (GlcNAc-1-P), which is converted into UDP-GlcNAc by the transfer of uridine 5-monophosphate (from uridine 5-triphosphate), a reaction catalyzed by the N-terminal domain. This chain is Bifunctional protein GlmU, found in Listeria innocua serovar 6a (strain ATCC BAA-680 / CLIP 11262).